The sequence spans 351 residues: Serine/threonine-protein kinase ZRK1 (351 aa).

Residues 60–347 enclose the Protein kinase domain; sequence FDSSCFVSQD…KELKQIEASL (288 aa). ATP is bound by residues 66-74 and lysine 87; that span reads VSQDVYYKW. Catalysis depends on aspartate 191, which acts as the Proton acceptor.

Belongs to the protein kinase superfamily. Ser/Thr protein kinase family. ZRK subfamily. In terms of assembly, component of a stable high-order oligomeric complex made of RKS1 and RPP13L4/ZAR1 which recruits Xanthomonas campestris effector XopAC/AvrAC-mediated uridylylated PBL2 in the presence of ATP to form a wheel-like pentameric resistosome; this complex triggers immunity toward X.campestris in vascular tissues. Interacts with RPP13L4/ZAR1 and uridylylated PBL2. Expressed at high levels in germinating seeds and at lower levels in adult leaves.

It catalyses the reaction L-seryl-[protein] + ATP = O-phospho-L-seryl-[protein] + ADP + H(+). It carries out the reaction L-threonyl-[protein] + ATP = O-phospho-L-threonyl-[protein] + ADP + H(+). Functionally, serine/threonine-protein kinase that confers a broad-spectrum quantitative disease resistance (QDR) to the pathogenic biotrophic bacteria Xanthomonas campestris (e.g. pv. campestris (Xcc), pv. raphani, pv. armoriaceae and pv. incanae) by restricting bacterial spread to the vascular system from the infection site; X.campestris causes black rot disease in crops. Seems to not have any kinase activity. In Arabidopsis thaliana (Mouse-ear cress), this protein is Serine/threonine-protein kinase ZRK1.